We begin with the raw amino-acid sequence, 1770 residues long: Transposon Ty2-OR2 Gag-Pol polyprotein (1770 aa).

2 disordered regions span residues 1-88 (MESQ…YQQH) and 359-449 (QHSE…SNDE). 2 stretches are compositionally biased toward polar residues: residues 19 to 39 (ASVT…SASN) and 49 to 60 (KVNSQEETTPGT). The RNA-binding stretch occupies residues 295 to 397 (ENNINVSDRL…SSKPRAAKAH (103 aa)). The segment covering 369–381 (TSPNTTNTKVTTR) has biased composition (low complexity). 2 stretches are compositionally biased toward polar residues: residues 399–408 (IATSSKFSRV) and 415–435 (ESTV…GQQQ). The active-site For protease activity; shared with dimeric partner is D457. The tract at residues 579 to 636 (NVNKSKSVNKYPYPLIHRMLGHANFRSIQKSLKKNAVTYLKESDIEWSNASTYQCPDC) is integrase-type zinc finger-like. In terms of domain architecture, Integrase catalytic spans 656-831 (ESYEPFQYLH…AGLDITTILP (176 aa)). Mg(2+) is bound by residues D667 and D732. Disordered stretches follow at residues 1005 to 1038 (GGTI…MIDL), 1057 to 1135 (GGTE…KSSK), 1146 to 1165 (LPLP…VSKD), and 1170 to 1205 (HSRQ…TEIE). Composition is skewed to polar residues over residues 1009 to 1024 (ESDT…FTAR) and 1065 to 1082 (QRNS…STPS). Positions 1151–1165 (LTHKSPTDTSDVSKD) are enriched in basic and acidic residues. The Bipartite nuclear localization signal signature appears at 1193–1227 (KKRSLEDNETEIEVSRDTWNNKNMRSLEPPRSKKR). In terms of domain architecture, Reverse transcriptase Ty1/copia-type spans 1353–1491 (NDYYITQLDI…DILGLEIKYQ (139 aa)). Residues D1361, D1442, D1443, D1625, E1667, and D1700 each coordinate Mg(2+). The region spanning 1625–1767 (DASYGNQPYY…IKTFKLLTNK (143 aa)) is the RNase H Ty1/copia-type domain.

As to quaternary structure, the capsid protein forms a homotrimer, from which the VLPs are assembled. The protease is a homodimer, whose active site consists of two apposed aspartic acid residues. Post-translationally, initially, virus-like particles (VLPs) are composed of the structural unprocessed proteins Gag and Gag-Pol, and also contain the host initiator methionine tRNA (tRNA(i)-Met) which serves as a primer for minus-strand DNA synthesis, and a dimer of genomic Ty RNA. Processing of the polyproteins occurs within the particle and proceeds by an ordered pathway, called maturation. First, the protease (PR) is released by autocatalytic cleavage of the Gag-Pol polyprotein, and this cleavage is a prerequisite for subsequent processing at the remaining sites to release the mature structural and catalytic proteins. Maturation takes place prior to the RT reaction and is required to produce transposition-competent VLPs.

Its subcellular location is the cytoplasm. It localises to the nucleus. The enzyme catalyses DNA(n) + a 2'-deoxyribonucleoside 5'-triphosphate = DNA(n+1) + diphosphate. It carries out the reaction Endonucleolytic cleavage to 5'-phosphomonoester.. Functionally, capsid protein (CA) is the structural component of the virus-like particle (VLP), forming the shell that encapsulates the retrotransposons dimeric RNA genome. The particles are assembled from trimer-clustered units and there are holes in the capsid shells that allow for the diffusion of macromolecules. CA also has nucleocapsid-like chaperone activity, promoting primer tRNA(i)-Met annealing to the multipartite primer-binding site (PBS), dimerization of Ty2 RNA and initiation of reverse transcription. The aspartyl protease (PR) mediates the proteolytic cleavages of the Gag and Gag-Pol polyproteins after assembly of the VLP. In terms of biological role, reverse transcriptase/ribonuclease H (RT) is a multifunctional enzyme that catalyzes the conversion of the retro-elements RNA genome into dsDNA within the VLP. The enzyme displays a DNA polymerase activity that can copy either DNA or RNA templates, and a ribonuclease H (RNase H) activity that cleaves the RNA strand of RNA-DNA heteroduplexes during plus-strand synthesis and hydrolyzes RNA primers. The conversion leads to a linear dsDNA copy of the retrotransposon that includes long terminal repeats (LTRs) at both ends. Its function is as follows. Integrase (IN) targets the VLP to the nucleus, where a subparticle preintegration complex (PIC) containing at least integrase and the newly synthesized dsDNA copy of the retrotransposon must transit the nuclear membrane. Once in the nucleus, integrase performs the integration of the dsDNA into the host genome. This is Transposon Ty2-OR2 Gag-Pol polyprotein (TY2B-OR2) from Saccharomyces cerevisiae (strain ATCC 204508 / S288c) (Baker's yeast).